The primary structure comprises 1438 residues: DNA-directed RNA polymerase subunit beta' (1438 aa).

Residues cysteine 72, cysteine 74, cysteine 87, and cysteine 90 each coordinate Zn(2+). Residues aspartate 483, aspartate 485, and aspartate 487 each coordinate Mg(2+). The Zn(2+) site is built by cysteine 831, cysteine 905, cysteine 912, and cysteine 915.

The protein belongs to the RNA polymerase beta' chain family. As to quaternary structure, the RNAP catalytic core consists of 2 alpha, 1 beta, 1 beta' and 1 omega subunit. When a sigma factor is associated with the core the holoenzyme is formed, which can initiate transcription. Mg(2+) is required as a cofactor. The cofactor is Zn(2+).

It carries out the reaction RNA(n) + a ribonucleoside 5'-triphosphate = RNA(n+1) + diphosphate. Its function is as follows. DNA-dependent RNA polymerase catalyzes the transcription of DNA into RNA using the four ribonucleoside triphosphates as substrates. The polypeptide is DNA-directed RNA polymerase subunit beta' (Flavobacterium psychrophilum (strain ATCC 49511 / DSM 21280 / CIP 103535 / JIP02/86)).